Consider the following 56-residue polypeptide: UPF0391 membrane protein Noc_0482 (56 aa).

2 helical membrane passes run 1 to 21 and 29 to 49; these read MFGWAVTFLIIALIAALFGFT and HIAWILFVVGLILFVVFLLLG.

The protein belongs to the UPF0391 family.

It is found in the cell membrane. This is UPF0391 membrane protein Noc_0482 from Nitrosococcus oceani (strain ATCC 19707 / BCRC 17464 / JCM 30415 / NCIMB 11848 / C-107).